The following is a 441-amino-acid chain: MQPLPSLCGRALVALILACGVAGIQAEEREFPPAGATQPLPGTGEMMETPTETSWPGRSNASDPRSSATPQIPRGGRMAGIPPRTPPPCDGPIEIKETFKYINTVVSCLVFVLGIIGNSTLLRIIYKNKCMRNGPNILIASLALGDLLHIIIDIPINTYKLLAKDWPFGVEMCKLVPFIQKASVGITVLSLCALSIDRYRAVASWSRIKGIGVPKWTAVEIVLIWVVSVVLAVPEAVGFDIITSDHIGNKLRICLLHPTQKTAFMQFYKTAKDWWLFSFYFCLPLAITALFYTLMTCEMLRKKSGMQIALNDHLKQRREVAKTVFCLVLVFALCWLPLHLSRILKLTLYDQHDPRRCEFLSFLLVLDYIGINMASLNSCINPIALYLVSKRFKNCFKSCLCCWCQSFEEKQSLEEKQSCLKFKANDHGYDNFRSSNKYSSS.

The N-terminal stretch at 1–26 is a signal peptide; the sequence is MQPLPSLCGRALVALILACGVAGIQA. Residues 27–100 are Extracellular-facing; it reads EEREFPPAGA…GPIEIKETFK (74 aa). The interval 30 to 87 is disordered; the sequence is EFPPAGATQPLPGTGEMMETPTETSWPGRSNASDPRSSATPQIPRGGRMAGIPPRTPP. Over residues 41–53 the composition is skewed to low complexity; that stretch reads PGTGEMMETPTET. Residues 54 to 70 show a composition bias toward polar residues; that stretch reads SWPGRSNASDPRSSATP. The helical transmembrane segment at 101 to 125 threads the bilayer; it reads YINTVVSCLVFVLGIIGNSTLLRII. The Cytoplasmic portion of the chain corresponds to 126 to 136; that stretch reads YKNKCMRNGPN. The chain crosses the membrane as a helical span at residues 137–162; that stretch reads ILIASLALGDLLHIIIDIPINTYKLL. At 163–174 the chain is on the extracellular side; it reads AKDWPFGVEMCK. Cysteine 173 and cysteine 254 are oxidised to a cystine. Residues 175–196 traverse the membrane as a helical segment; sequence LVPFIQKASVGITVLSLCALSI. Residues 197–217 lie on the Cytoplasmic side of the membrane; it reads DRYRAVASWSRIKGIGVPKWT. The chain crosses the membrane as a helical span at residues 218–242; that stretch reads AVEIVLIWVVSVVLAVPEAVGFDII. Residues 243–270 lie on the Extracellular side of the membrane; it reads TSDHIGNKLRICLLHPTQKTAFMQFYKT. A helical transmembrane segment spans residues 271–295; that stretch reads AKDWWLFSFYFCLPLAITALFYTLM. The Cytoplasmic portion of the chain corresponds to 296–323; that stretch reads TCEMLRKKSGMQIALNDHLKQRREVAKT. A Phosphoserine modification is found at serine 304. A helical transmembrane segment spans residues 324 to 349; it reads VFCLVLVFALCWLPLHLSRILKLTLY. Residues 350–361 are Extracellular-facing; it reads DQHDPRRCEFLS. A helical membrane pass occupies residues 362-388; sequence FLLVLDYIGINMASLNSCINPIALYLV. Topologically, residues 389–441 are cytoplasmic; sequence SKRFKNCFKSCLCCWCQSFEEKQSLEEKQSCLKFKANDHGYDNFRSSNKYSSS. 2 S-palmitoyl cysteine lipidation sites follow: cysteine 402 and cysteine 404. Serine 418, serine 434, and serine 435 each carry phosphoserine. Tyrosine 438 bears the Phosphotyrosine mark. Phosphoserine occurs at positions 439, 440, and 441.

Belongs to the G-protein coupled receptor 1 family. Endothelin receptor subfamily. EDNRB sub-subfamily. It is not sure whether phosphorylation is on Ser-434 or Ser-435.

It is found in the cell membrane. Non-specific receptor for endothelin 1, 2, and 3. Mediates its action by association with G proteins that activate a phosphatidylinositol-calcium second messenger system. The sequence is that of Endothelin receptor type B (EDNRB) from Bos taurus (Bovine).